A 337-amino-acid chain; its full sequence is Cytoskeleton protein RodZ (337 aa).

Residues 1–111 (MNTEATHDQN…LGKRRKKRDG (111 aa)) lie on the Cytoplasmic side of the membrane. Positions 19-71 (LRNAREQLGLSQQAVAERLCLKVSTVRDIEEDKAPADLASTFLRGYIRSYARL) constitute an HTH cro/C1-type domain. The segment at residues 30 to 49 (QQAVAERLCLKVSTVRDIEE) is a DNA-binding region (H-T-H motif). The helical; Signal-anchor for type II membrane protein transmembrane segment at 112–132 (WLMTFTWLVLFVVIGLSGAWW) threads the bilayer. Residues 133–337 (WQDHKAQQEE…TLNAEQSPAQ (205 aa)) lie on the Periplasmic side of the membrane. Positions 145–167 (TMADQSSAELSSNSEQGQSVPLN) are enriched in polar residues. The segment at 145–236 (TMADQSSAEL…TAATTPDGAA (92 aa)) is disordered. Low complexity predominate over residues 168–207 (TSTTTDPATTSTPPASVDTTATNTQTPVVTAPAPAVDPQQ). The segment covering 208–218 (NAVVSPSQANV) has biased composition (polar residues). Low complexity predominate over residues 219 to 236 (DTAATPAPTAATTPDGAA).

Belongs to the RodZ family.

The protein resides in the cell inner membrane. Its function is as follows. Cytoskeletal protein that is involved in cell-shape control through regulation of the length of the long axis. The sequence is that of Cytoskeleton protein RodZ from Escherichia coli O157:H7.